A 142-amino-acid chain; its full sequence is Large ribosomal subunit protein uL11 (142 aa).

The protein belongs to the universal ribosomal protein uL11 family. In terms of assembly, part of the ribosomal stalk of the 50S ribosomal subunit. Interacts with L10 and the large rRNA to form the base of the stalk. L10 forms an elongated spine to which L12 dimers bind in a sequential fashion forming a multimeric L10(L12)X complex. Post-translationally, one or more lysine residues are methylated.

Its function is as follows. Forms part of the ribosomal stalk which helps the ribosome interact with GTP-bound translation factors. The chain is Large ribosomal subunit protein uL11 from Rhodopseudomonas palustris (strain HaA2).